Reading from the N-terminus, the 440-residue chain is Ribosomal protein uS12 methylthiotransferase RimO (440 aa).

One can recognise an MTTase N-terminal domain in the interval 2-118; that stretch reads KKAGIIHLGC…FVSLITSNGE (117 aa). Cys-11, Cys-47, Cys-81, Cys-154, Cys-158, and Cys-161 together coordinate [4Fe-4S] cluster. A Radical SAM core domain is found at 140–370; that stretch reads ISPNFWVYVK…MSTQKEISKK (231 aa). The region spanning 373–440 is the TRAM domain; that stretch reads AKLLGREFDV…RAYDLLGELV (68 aa).

It belongs to the methylthiotransferase family. RimO subfamily. [4Fe-4S] cluster serves as cofactor.

It localises to the cytoplasm. It catalyses the reaction L-aspartate(89)-[ribosomal protein uS12]-hydrogen + (sulfur carrier)-SH + AH2 + 2 S-adenosyl-L-methionine = 3-methylsulfanyl-L-aspartate(89)-[ribosomal protein uS12]-hydrogen + (sulfur carrier)-H + 5'-deoxyadenosine + L-methionine + A + S-adenosyl-L-homocysteine + 2 H(+). Functionally, catalyzes the methylthiolation of an aspartic acid residue of ribosomal protein uS12. The sequence is that of Ribosomal protein uS12 methylthiotransferase RimO from Dictyoglomus thermophilum (strain ATCC 35947 / DSM 3960 / H-6-12).